Consider the following 190-residue polypeptide: Probable nicotinate-nucleotide adenylyltransferase (190 aa).

It belongs to the NadD family.

It catalyses the reaction nicotinate beta-D-ribonucleotide + ATP + H(+) = deamido-NAD(+) + diphosphate. It participates in cofactor biosynthesis; NAD(+) biosynthesis; deamido-NAD(+) from nicotinate D-ribonucleotide: step 1/1. In terms of biological role, catalyzes the reversible adenylation of nicotinate mononucleotide (NaMN) to nicotinic acid adenine dinucleotide (NaAD). This chain is Probable nicotinate-nucleotide adenylyltransferase, found in Staphylococcus saprophyticus subsp. saprophyticus (strain ATCC 15305 / DSM 20229 / NCIMB 8711 / NCTC 7292 / S-41).